A 340-amino-acid chain; its full sequence is Adenosine deaminase-like protein (340 aa).

Positions 14 and 16 each coordinate Zn(2+). Residues His-16, Asn-18, His-68, 100 to 103 (TTPK), and Gly-173 contribute to the N(6)-methyl-AMP site. His-200 is a Zn(2+) binding site. Residues Glu-203, Asp-278, and Asp-279 each contribute to the N(6)-methyl-AMP site. Glu-203 acts as the Proton donor in catalysis. Asp-278 is a binding site for Zn(2+).

It belongs to the metallo-dependent hydrolases superfamily. Adenosine and AMP deaminases family. In terms of assembly, monomer. Zn(2+) is required as a cofactor.

It carries out the reaction N(6)-methyl-AMP + H2O + H(+) = IMP + methylamine. Its function is as follows. Catalyzes the hydrolysis of the free cytosolic methylated adenosine nucleotide N(6)-methyl-AMP (N6-mAMP) to produce inositol monophosphate (IMP) and methylamine. Is required for the catabolism of cytosolic N6-mAMP, which is derived from the degradation of mRNA containing N6-methylated adenine (m6A). The chain is Adenosine deaminase-like protein from Drosophila pseudoobscura pseudoobscura (Fruit fly).